A 382-amino-acid chain; its full sequence is Protein-arginine rhamnosyltransferase (382 aa).

Position 18-19 (18-19 (FG)) interacts with dTDP. D20 acts as the Proton acceptor in catalysis. Residues D20, Y187, 250 to 252 (VPQ), and 268 to 272 (RGEDS) each bind dTDP-beta-L-rhamnose. DTDP-binding positions include Y187, 250–252 (VPQ), and 268–272 (RGEDS). E270 is an active-site residue.

Belongs to the glycosyltransferase 104 family.

It carries out the reaction dTDP-beta-L-rhamnose + L-arginyl-[protein] = N(omega)-(alpha-L-rhamnosyl)-L-arginyl-[protein] + dTDP + H(+). In terms of biological role, protein-arginine rhamnosyltransferase that catalyzes the transfer of a single rhamnose to elongation factor P (EF-P) on 'Lys-32', a modification required for EF-P-dependent rescue of polyproline stalled ribosomes. This chain is Protein-arginine rhamnosyltransferase, found in Neisseria meningitidis serogroup B / serotype 15 (strain H44/76).